The sequence spans 75 residues: Nigwaprin-a (75 aa).

The signal sequence occupies residues 1–24; that stretch reads MSSGGLLLLLGLLTLWAELTPVSG. Positions 27–72 constitute a WAP domain; the sequence is RPVKPGLCPPRPQKPPCVKECKNDWSCRGEQKCCRYGCIYECRDPI. 4 disulfides stabilise this stretch: cysteine 34/cysteine 60, cysteine 43/cysteine 64, cysteine 47/cysteine 59, and cysteine 53/cysteine 68.

Belongs to the venom waprin family. Expressed by the venom gland.

The protein localises to the secreted. Damages membranes of susceptible bacteria. Has no hemolytic activity. Not toxic to mice. Does not inhibit the proteinases elastase and cathepsin G. The sequence is that of Nigwaprin-a from Cryptophis nigrescens (Eastern small-eyed snake).